The following is a 237-amino-acid chain: Leucyl/phenylalanyl-tRNA--protein transferase (237 aa).

Belongs to the L/F-transferase family.

The protein localises to the cytoplasm. It catalyses the reaction N-terminal L-lysyl-[protein] + L-leucyl-tRNA(Leu) = N-terminal L-leucyl-L-lysyl-[protein] + tRNA(Leu) + H(+). The enzyme catalyses N-terminal L-arginyl-[protein] + L-leucyl-tRNA(Leu) = N-terminal L-leucyl-L-arginyl-[protein] + tRNA(Leu) + H(+). The catalysed reaction is L-phenylalanyl-tRNA(Phe) + an N-terminal L-alpha-aminoacyl-[protein] = an N-terminal L-phenylalanyl-L-alpha-aminoacyl-[protein] + tRNA(Phe). Functionally, functions in the N-end rule pathway of protein degradation where it conjugates Leu, Phe and, less efficiently, Met from aminoacyl-tRNAs to the N-termini of proteins containing an N-terminal arginine or lysine. The chain is Leucyl/phenylalanyl-tRNA--protein transferase from Shewanella baltica (strain OS155 / ATCC BAA-1091).